Reading from the N-terminus, the 209-residue chain is ATP phosphoribosyltransferase (209 aa).

Belongs to the ATP phosphoribosyltransferase family. Short subfamily. Heteromultimer composed of HisG and HisZ subunits.

The protein localises to the cytoplasm. The enzyme catalyses 1-(5-phospho-beta-D-ribosyl)-ATP + diphosphate = 5-phospho-alpha-D-ribose 1-diphosphate + ATP. The protein operates within amino-acid biosynthesis; L-histidine biosynthesis; L-histidine from 5-phospho-alpha-D-ribose 1-diphosphate: step 1/9. Catalyzes the condensation of ATP and 5-phosphoribose 1-diphosphate to form N'-(5'-phosphoribosyl)-ATP (PR-ATP). Has a crucial role in the pathway because the rate of histidine biosynthesis seems to be controlled primarily by regulation of HisG enzymatic activity. This chain is ATP phosphoribosyltransferase, found in Caldicellulosiruptor bescii (strain ATCC BAA-1888 / DSM 6725 / KCTC 15123 / Z-1320) (Anaerocellum thermophilum).